The sequence spans 251 residues: Zwei Ig domain protein zig-3 (251 aa).

The signal sequence occupies residues 1-19 (MLLICISVLAAISAHPLSS). Ig-like C2-type domains are found at residues 42–144 (PSLK…AKIS) and 160–244 (PVIT…TFLY). Disulfide bonds link Cys-65–Cys-128 and Cys-181–Cys-228.

As to expression, expressed in PVT, AIM and ASI neurons, in vulva and weakly in body wall muscles.

It localises to the secreted. Functionally, required for maintaining axon position of PVQ and PVP neurons postembryonically in the ventral nerve cord (VNC) by preventing axons drifting into the opposite side of the VNC that could occur during body growth and movement. This Caenorhabditis elegans protein is Zwei Ig domain protein zig-3.